The primary structure comprises 145 residues: D-aminoacyl-tRNA deacylase (145 aa).

A Gly-cisPro motif, important for rejection of L-amino acids motif is present at residues 137–138 (GP).

The protein belongs to the DTD family. In terms of assembly, homodimer.

The protein localises to the cytoplasm. It carries out the reaction glycyl-tRNA(Ala) + H2O = tRNA(Ala) + glycine + H(+). The catalysed reaction is a D-aminoacyl-tRNA + H2O = a tRNA + a D-alpha-amino acid + H(+). Functionally, an aminoacyl-tRNA editing enzyme that deacylates mischarged D-aminoacyl-tRNAs. Also deacylates mischarged glycyl-tRNA(Ala), protecting cells against glycine mischarging by AlaRS. Acts via tRNA-based rather than protein-based catalysis; rejects L-amino acids rather than detecting D-amino acids in the active site. By recycling D-aminoacyl-tRNA to D-amino acids and free tRNA molecules, this enzyme counteracts the toxicity associated with the formation of D-aminoacyl-tRNA entities in vivo and helps enforce protein L-homochirality. The sequence is that of D-aminoacyl-tRNA deacylase from Shewanella baltica (strain OS155 / ATCC BAA-1091).